The chain runs to 119 residues: Aspartate 1-decarboxylase (119 aa).

The active-site Schiff-base intermediate with substrate; via pyruvic acid is the Ser-25. Pyruvic acid (Ser) is present on Ser-25. Thr-57 contributes to the substrate binding site. Catalysis depends on Tyr-58, which acts as the Proton donor. Residue 73–75 coordinates substrate; it reads GAA.

This sequence belongs to the PanD family. Heterooctamer of four alpha and four beta subunits. Requires pyruvate as cofactor. In terms of processing, is synthesized initially as an inactive proenzyme, which is activated by self-cleavage at a specific serine bond to produce a beta-subunit with a hydroxyl group at its C-terminus and an alpha-subunit with a pyruvoyl group at its N-terminus.

The protein resides in the cytoplasm. It catalyses the reaction L-aspartate + H(+) = beta-alanine + CO2. The protein operates within cofactor biosynthesis; (R)-pantothenate biosynthesis; beta-alanine from L-aspartate: step 1/1. Its function is as follows. Catalyzes the pyruvoyl-dependent decarboxylation of aspartate to produce beta-alanine. The chain is Aspartate 1-decarboxylase from Desulfotalea psychrophila (strain LSv54 / DSM 12343).